The following is a 320-amino-acid chain: Aminoacyl tRNA synthase complex-interacting multifunctional protein 2 (320 aa).

Position 36 is a phosphoserine (S36). The interaction with PRKN stretch occupies residues 82-162 (TPDADLDVTN…HTHSAVRSVP (81 aa)). Residues 162 to 225 (PANLLQCFGE…FLFSLFGQKQ (64 aa)) form an interaction with TP53 region. A GST C-terminal domain is found at 220–317 (LFGQKQDAVN…NLAPFHTALK (98 aa)).

Part of the multisynthetase complex (MSC), a multisubunit complex that groups tRNA ligases for Arg (RARS1), Asp (DARS1), Gln (QARS1), Ile (IARS1), Leu (LARS1), Lys (KARS1), Met (MARS1) the bifunctional ligase for Glu and Pro (EPRS1) and the auxiliary subunits AIMP1/p43, AIMP2/p38 and EEF1E1/p18. Interacts (via N-terminus) with KARS1. Interacts with EPRS1. Forms a linear complex that contains MARS1, EEF1E1, EPRS1 and AIMP2 that is at the core of the multisubunit complex. Binds FUBP1 (via C-terminus). Interacts in both its unphosphorylated and phosphorylated forms with p53/TP53 (via N-terminus) in the nucleus following UV irradiation. Interacts (via N-terminus) with PRKN/parkin (via first RING-type domain). Interacts with TARS3. In terms of processing, phosphorylated on serine residues in response to UV irradiation. Ubiquitinated by PRKN, leading to its degradation by the proteasome.

The protein localises to the cytoplasm. It is found in the cytosol. The protein resides in the nucleus. In terms of biological role, required for assembly and stability of the aminoacyl-tRNA synthase complex. Mediates ubiquitination and degradation of FUBP1, a transcriptional activator of MYC, leading to MYC down-regulation which is required for aveolar type II cell differentiation. Blocks MDM2-mediated ubiquitination and degradation of p53/TP53. Functions as a proapoptotic factor. The protein is Aminoacyl tRNA synthase complex-interacting multifunctional protein 2 (AIMP2) of Bos taurus (Bovine).